The following is a 116-amino-acid chain: Large ribosomal subunit protein bL19 (116 aa).

The protein belongs to the bacterial ribosomal protein bL19 family.

Functionally, this protein is located at the 30S-50S ribosomal subunit interface and may play a role in the structure and function of the aminoacyl-tRNA binding site. The polypeptide is Large ribosomal subunit protein bL19 (Actinobacillus succinogenes (strain ATCC 55618 / DSM 22257 / CCUG 43843 / 130Z)).